The sequence spans 1816 residues: uncharacterized protein (1816 aa).

2 disordered regions span residues 338–357 and 562–605; these read DSSS…NNNN and ELEK…IKPK. Positions 339–357 are enriched in low complexity; that stretch reads SSSSSSNNNNNNNNNNNNN. Basic and acidic residues predominate over residues 562-577; the sequence is ELEKERIKKEKEDSKK. A compositionally biased stretch (low complexity) spans 581–603; sequence KQSSSSSSSSTTTTSTTTSSTIK. The Helicase ATP-binding domain maps to 826 to 999; the sequence is LDIVDKRESA…FLKKIDPNRK (174 aa). Position 839-846 (839-846) interacts with ATP; the sequence is ASTSSGKT. A DEAH box motif is present at residues 949-952; the sequence is DEVH. The region spanning 1198–1379 is the Helicase C-terminal domain; it reads QLDLVIERFQ…SVVSPSLCLS (182 aa). The tract at residues 1388-1487 is disordered; sequence TNGSANKSNE…TTTKTPTTTS (100 aa). Residues 1395–1427 are compositionally biased toward basic and acidic residues; that stretch reads SNEENKVQVKENEKEREKEKEKEKEKEKEKETI. The span at 1445 to 1454 shows a compositional bias: acidic residues; that stretch reads NWDDDEEETA. Positions 1456-1487 are enriched in low complexity; sequence STKTTPATTPTTTTTENTPATTTTTKTPTTTS.

It belongs to the helicase family. SKI2 subfamily.

The protein resides in the nucleus. This is an uncharacterized protein from Dictyostelium discoideum (Social amoeba).